Reading from the N-terminus, the 173-residue chain is Large ribosomal subunit protein uL10 (173 aa).

Belongs to the universal ribosomal protein uL10 family. Part of the ribosomal stalk of the 50S ribosomal subunit. The N-terminus interacts with L11 and the large rRNA to form the base of the stalk. The C-terminus forms an elongated spine to which L12 dimers bind in a sequential fashion forming a multimeric L10(L12)X complex.

Functionally, forms part of the ribosomal stalk, playing a central role in the interaction of the ribosome with GTP-bound translation factors. This is Large ribosomal subunit protein uL10 from Acidithiobacillus ferrooxidans (strain ATCC 23270 / DSM 14882 / CIP 104768 / NCIMB 8455) (Ferrobacillus ferrooxidans (strain ATCC 23270)).